Reading from the N-terminus, the 246-residue chain is Bidirectional sugar transporter SWEET3a (246 aa).

The Extracellular segment spans residues 1–6; sequence MFPDIR. Residues 7–27 traverse the membrane as a helical segment; the sequence is FIVGIIGSVACMLLYSAPILT. Positions 7-96 constitute a MtN3/slv 1 domain; sequence FIVGIIGSVA…ISIYVWFAPR (90 aa). Over 28–42 the chain is Cytoplasmic; that stretch reads FKRVIKKASVEEFSC. The chain crosses the membrane as a helical span at residues 43-63; that stretch reads IPYILALFSCLTYSWYGFPVV. Residues 64–74 lie on the Extracellular side of the membrane; sequence SYGWENMTVCS. Residue N69 is glycosylated (N-linked (GlcNAc...) asparagine). Residues 75-95 form a helical membrane-spanning segment; that stretch reads ISSLGVLFEGTFISIYVWFAP. The Cytoplasmic segment spans residues 96–101; that stretch reads RGKKKQ. Residues 102–122 traverse the membrane as a helical segment; that stretch reads VMLMASLILAVFCMTVFFSSF. The Extracellular segment spans residues 123-131; it reads SIHNHHIRK. Residues 132 to 152 form a helical membrane-spanning segment; it reads VFVGSVGLVSSISMYGSPLVA. Residues 133-217 enclose the MtN3/slv 2 domain; that stretch reads FVGSVGLVSS…VVYCIYSKCK (85 aa). Residues 153-166 lie on the Cytoplasmic side of the membrane; the sequence is MKQVIRTKSVEFMP. A helical membrane pass occupies residues 167–187; that stretch reads FYLSLFTLFTSLTWMAYGVIG. Residues 188–191 lie on the Extracellular side of the membrane; the sequence is RDPF. A helical transmembrane segment spans residues 192 to 212; it reads IATPNCIGSIMGILQLVVYCI. Residues 213–246 lie on the Cytoplasmic side of the membrane; that stretch reads YSKCKEAPKVLHDIEQANVVKIPTSHVDTKGHNP.

It belongs to the SWEET sugar transporter family. As to quaternary structure, forms homooligomers and/or heterooligomers.

Its subcellular location is the cell membrane. Its function is as follows. Mediates both low-affinity uptake and efflux of sugar across the plasma membrane. The protein is Bidirectional sugar transporter SWEET3a (SWEET3A) of Oryza sativa subsp. japonica (Rice).